Consider the following 227-residue polypeptide: MQLCVALDLPTKEENLELIGKIKDYDVWLKVGLRSYIRDGEDFLKDIKKINPDFKIFLDLKLYDIPNTMADAAESIISLGVDMFNVHASAGKRAMREVMVRLERYEKRPIVLAVTALTSFNEDEFGKIYGDSISKKADQFAKDAYESGLDGVVCSAYESSSIKNITNRDFMTLTPGIRPFGEDSGDQQRVADVAFAKNAHVDFIVVGRPIYNSKNPAEVIRRILEQI.

Residues aspartate 8, lysine 30, 59–68 (DLKLYDIPNT), threonine 118, arginine 178, glutamine 187, glycine 207, and arginine 208 each bind substrate. Lysine 61 acts as the Proton donor in catalysis.

Belongs to the OMP decarboxylase family. Type 1 subfamily. As to quaternary structure, homodimer.

The enzyme catalyses orotidine 5'-phosphate + H(+) = UMP + CO2. Its pathway is pyrimidine metabolism; UMP biosynthesis via de novo pathway; UMP from orotate: step 2/2. Functionally, catalyzes the decarboxylation of orotidine 5'-monophosphate (OMP) to uridine 5'-monophosphate (UMP). The sequence is that of Orotidine 5'-phosphate decarboxylase from Sulfurimonas denitrificans (strain ATCC 33889 / DSM 1251) (Thiomicrospira denitrificans (strain ATCC 33889 / DSM 1251)).